Consider the following 92-residue polypeptide: Small ribosomal subunit protein uS19 (92 aa).

Belongs to the universal ribosomal protein uS19 family.

In terms of biological role, protein S19 forms a complex with S13 that binds strongly to the 16S ribosomal RNA. In Mycoplasmopsis synoviae (strain 53) (Mycoplasma synoviae), this protein is Small ribosomal subunit protein uS19.